The sequence spans 572 residues: Urease subunit alpha (572 aa).

The region spanning 134 to 572 (GGIDAHVHMI…VSLGQLYFFS (439 aa)) is the Urease domain. Ni(2+)-binding residues include His139, His141, and Lys222. Lys222 carries the post-translational modification N6-carboxylysine. His224 serves as a coordination point for substrate. Ni(2+) is bound by residues His251 and His277. The Proton donor role is filled by His325. Asp365 is a binding site for Ni(2+).

Belongs to the metallo-dependent hydrolases superfamily. Urease alpha subunit family. As to quaternary structure, heterotrimer of UreA (gamma), UreB (beta) and UreC (alpha) subunits. Three heterotrimers associate to form the active enzyme. The cofactor is Ni cation. Carboxylation allows a single lysine to coordinate two nickel ions.

The protein resides in the cytoplasm. The enzyme catalyses urea + 2 H2O + H(+) = hydrogencarbonate + 2 NH4(+). The protein operates within nitrogen metabolism; urea degradation; CO(2) and NH(3) from urea (urease route): step 1/1. In Laribacter hongkongensis (strain HLHK9), this protein is Urease subunit alpha.